The chain runs to 47 residues: Defensin NsD7 (47 aa).

Cystine bridges form between C3–C47, C14–C34, C20–C41, and C24–C43. Positions 4, 33, 36, and 39 each coordinate a 1,2-diacyl-sn-glycero-3-phosphate.

This sequence belongs to the DEFL family. In the presence of phosphatidic acid (PA), forms right-handed double helices which tend to bundle into fibrils. Each helix is a repetition of dimers containing 2 bound molecules of PA per dimer. Dimers are arranged orthogonally in a tip-to-tip configuration with 1 molecule of PA located at the dimer contact interface. Association of 2 helices to form a double helix depends on intercalating isoleucine residues Ile-15 and Ile-37. Bundling of double helices into fibrils depends on Arg-26.

It is found in the vacuole. Its function is as follows. Plant defense peptide. Disrupts membranes containing phosphatidic acid (PA) via a PA-dependent oligomerization process. The chain is Defensin NsD7 from Nicotiana suaveolens (Australian tobacco).